The primary structure comprises 174 residues: Protein FanG (174 aa).

The first 21 residues, 1–21 (MKKLYKAITVICILMSNLQSA), serve as a signal peptide directing secretion. Cysteines 41 and 75 form a disulfide.

It localises to the fimbrium. Its function is as follows. Involved in the biosynthesis of K99 fimbriae. This chain is Protein FanG (fanG), found in Escherichia coli.